Consider the following 140-residue polypeptide: NADPH-dependent 7-cyano-7-deazaguanine reductase (140 aa).

Cys-49 serves as the catalytic Thioimide intermediate. Asp-56 functions as the Proton donor in the catalytic mechanism. Substrate contacts are provided by residues 71 to 73 (IEL) and 90 to 91 (HE).

Belongs to the GTP cyclohydrolase I family. QueF type 1 subfamily.

It is found in the cytoplasm. It catalyses the reaction 7-aminomethyl-7-carbaguanine + 2 NADP(+) = 7-cyano-7-deazaguanine + 2 NADPH + 3 H(+). It participates in tRNA modification; tRNA-queuosine biosynthesis. In terms of biological role, catalyzes the NADPH-dependent reduction of 7-cyano-7-deazaguanine (preQ0) to 7-aminomethyl-7-deazaguanine (preQ1). The chain is NADPH-dependent 7-cyano-7-deazaguanine reductase from Prochlorococcus marinus (strain NATL2A).